Here is a 132-residue protein sequence, read N- to C-terminus: Small ribosomal subunit protein uS11 (132 aa).

Belongs to the universal ribosomal protein uS11 family. In terms of assembly, part of the 30S ribosomal subunit. Interacts with proteins S7 and S18. Binds to IF-3.

Functionally, located on the platform of the 30S subunit, it bridges several disparate RNA helices of the 16S rRNA. Forms part of the Shine-Dalgarno cleft in the 70S ribosome. The chain is Small ribosomal subunit protein uS11 from Alkaliphilus metalliredigens (strain QYMF).